We begin with the raw amino-acid sequence, 194 residues long: Adenylate kinase isoenzyme 1 (194 aa).

Met-1 is modified (N-acetylmethionine). 18 to 23 is an ATP binding site; it reads GSGKGT. Ser-38 carries the phosphoserine modification. The segment at 38–67 is NMP; the sequence is STGDLLRAEVSSGSSRGKMLSSIMEKGELV. AMP is bound by residues Thr-39, Arg-44, 65–67, 94–97, and Gln-101; these read ELV and GYPR. Residues 131-141 are LID; that stretch reads KRGETSGRVDD. Arg-132 serves as a coordination point for ATP. AMP contacts are provided by Arg-138 and Arg-149. ATP is bound at residue Gly-177.

The protein belongs to the adenylate kinase family. AK1 subfamily. Monomer. It depends on Mg(2+) as a cofactor.

It localises to the cytoplasm. The enzyme catalyses a ribonucleoside 5'-phosphate + ATP = a ribonucleoside 5'-diphosphate + ADP. It catalyses the reaction AMP + ATP = 2 ADP. The catalysed reaction is dAMP + ATP = dADP + ADP. It carries out the reaction dATP + AMP = dADP + ADP. The enzyme catalyses dAMP + dATP = 2 dADP. It catalyses the reaction a 2'-deoxyribonucleoside 5'-diphosphate + ATP = a 2'-deoxyribonucleoside 5'-triphosphate + ADP. The catalysed reaction is a ribonucleoside 5'-diphosphate + ATP = a ribonucleoside 5'-triphosphate + ADP. It carries out the reaction CDP + GTP = CTP + GDP. The enzyme catalyses GDP + ATP = GTP + ADP. It catalyses the reaction UDP + ATP = UTP + ADP. The catalysed reaction is GTP + UDP = UTP + GDP. It carries out the reaction dTDP + GTP = dTTP + GDP. The enzyme catalyses dCDP + GTP = dCTP + GDP. It catalyses the reaction dGDP + ATP = dGTP + ADP. The catalysed reaction is dADP + GTP = dATP + GDP. It carries out the reaction thiamine diphosphate + ADP = thiamine triphosphate + AMP. Functionally, catalyzes the reversible transfer of the terminal phosphate group between ATP and AMP. Also displays broad nucleoside diphosphate kinase activity. Plays an important role in cellular energy homeostasis and in adenine nucleotide metabolism. Also catalyzes at a very low rate the synthesis of thiamine triphosphate (ThTP) from thiamine diphosphate (ThDP) and ADP. The sequence is that of Adenylate kinase isoenzyme 1 (Ak1) from Rattus norvegicus (Rat).